A 108-amino-acid chain; its full sequence is Small ribosomal subunit protein eS25y (108 aa).

The interval 1-36 (MAPKKDKVPPPSSKPAKSGGGKQKKKKWSKGKQKEK) is disordered. Over residues 22-31 (KQKKKKWSKG) the composition is skewed to basic residues.

It belongs to the eukaryotic ribosomal protein eS25 family.

This chain is Small ribosomal subunit protein eS25y (RPS25B), found in Arabidopsis thaliana (Mouse-ear cress).